Here is a 789-residue protein sequence, read N- to C-terminus: Protein translocase subunit SecA 2 (789 aa).

ATP-binding positions include Gln-79, 97 to 101 (GEGKT), and Asp-487.

The protein belongs to the SecA family. In terms of assembly, monomer and homodimer. Part of the essential Sec protein translocation apparatus which comprises SecA, SecYEG and auxiliary proteins SecDF. Other proteins may also be involved.

The protein resides in the cell membrane. It is found in the cytoplasm. It catalyses the reaction ATP + H2O + cellular proteinSide 1 = ADP + phosphate + cellular proteinSide 2.. Part of the Sec protein translocase complex. Interacts with the SecYEG preprotein conducting channel. Has a central role in coupling the hydrolysis of ATP to the transfer of proteins into and across the cell membrane, serving as an ATP-driven molecular motor driving the stepwise translocation of polypeptide chains across the membrane. This is Protein translocase subunit SecA 2 from Pediococcus pentosaceus (strain ATCC 25745 / CCUG 21536 / LMG 10740 / 183-1w).